The chain runs to 438 residues: Adenylosuccinate synthetase (438 aa).

Residues 13 to 19 (GDEGKGK) and 41 to 43 (GHT) each bind GTP. The Proton acceptor role is filled by D14. Mg(2+) is bound by residues D14 and G41. IMP contacts are provided by residues 14-17 (DEGK), 39-42 (NAGH), T130, R144, Q225, T240, and R310. H42 (proton donor) is an active-site residue. Substrate is bound at residue 306-312 (ATTGRLR). Residues R312, 338 to 340 (KLD), and 421 to 423 (STG) contribute to the GTP site.

Belongs to the adenylosuccinate synthetase family. Homodimer. It depends on Mg(2+) as a cofactor.

The protein resides in the cytoplasm. It carries out the reaction IMP + L-aspartate + GTP = N(6)-(1,2-dicarboxyethyl)-AMP + GDP + phosphate + 2 H(+). The protein operates within purine metabolism; AMP biosynthesis via de novo pathway; AMP from IMP: step 1/2. Functionally, plays an important role in the de novo pathway of purine nucleotide biosynthesis. Catalyzes the first committed step in the biosynthesis of AMP from IMP. The polypeptide is Adenylosuccinate synthetase (Aliivibrio fischeri (strain ATCC 700601 / ES114) (Vibrio fischeri)).